Reading from the N-terminus, the 434-residue chain is Asparagine--tRNA ligase (434 aa).

It belongs to the class-II aminoacyl-tRNA synthetase family.

The protein localises to the cytoplasm. The enzyme catalyses tRNA(Asn) + L-asparagine + ATP = L-asparaginyl-tRNA(Asn) + AMP + diphosphate + H(+). In Pyrococcus abyssi (strain GE5 / Orsay), this protein is Asparagine--tRNA ligase.